Reading from the N-terminus, the 204-residue chain is Nucleoside triphosphate pyrophosphatase (204 aa).

Aspartate 79 functions as the Proton acceptor in the catalytic mechanism.

It belongs to the Maf family. Requires a divalent metal cation as cofactor.

The protein localises to the cytoplasm. It catalyses the reaction a ribonucleoside 5'-triphosphate + H2O = a ribonucleoside 5'-phosphate + diphosphate + H(+). It carries out the reaction a 2'-deoxyribonucleoside 5'-triphosphate + H2O = a 2'-deoxyribonucleoside 5'-phosphate + diphosphate + H(+). Functionally, nucleoside triphosphate pyrophosphatase. May have a dual role in cell division arrest and in preventing the incorporation of modified nucleotides into cellular nucleic acids. In Trichodesmium erythraeum (strain IMS101), this protein is Nucleoside triphosphate pyrophosphatase.